The sequence spans 109 residues: Large ribosomal subunit protein uL24 (109 aa).

This sequence belongs to the universal ribosomal protein uL24 family. As to quaternary structure, part of the 50S ribosomal subunit.

Its function is as follows. One of two assembly initiator proteins, it binds directly to the 5'-end of the 23S rRNA, where it nucleates assembly of the 50S subunit. Functionally, one of the proteins that surrounds the polypeptide exit tunnel on the outside of the subunit. The chain is Large ribosomal subunit protein uL24 from Hamiltonella defensa subsp. Acyrthosiphon pisum (strain 5AT).